The chain runs to 205 residues: 2-dehydro-3-deoxy-6-phosphogalactonate aldolase (205 aa).

Residue Arg-14 coordinates 2-dehydro-3-deoxy-6-phospho-D-galactonate. The Proton donor/acceptor role is filled by Glu-37. The 2-dehydro-3-deoxy-6-phospho-D-galactonate site is built by Thr-66, Lys-126, Gly-156, Gly-176, and Ser-177. Lys-126 serves as the catalytic Schiff-base intermediate with substrate.

It belongs to the KHG/KDPG aldolase family. As to quaternary structure, homotrimer.

It catalyses the reaction 2-dehydro-3-deoxy-6-phospho-D-galactonate = D-glyceraldehyde 3-phosphate + pyruvate. The protein operates within carbohydrate acid metabolism; D-galactonate degradation; D-glyceraldehyde 3-phosphate and pyruvate from D-galactonate: step 3/3. In terms of biological role, involved in the degradation of galactose via the DeLey-Doudoroff pathway. Catalyzes the reversible, stereospecific retro-aldol cleavage of 2-keto-3-deoxy-6-phosphogalactonate (KDPGal) to pyruvate and D-glyceraldehyde-3-phosphate. In the synthetic direction, it catalyzes the addition of pyruvate to electrophilic aldehydes with re-facial selectivity. It can use a limited number of aldehyde substrates, including D-glyceraldehyde-3-phosphate (natural substrate), D-glyceraldehyde, glycolaldehyde, 2-pyridinecarboxaldehyde, D-ribose, D-erythrose and D-threose. It efficiently catalyzes aldol addition only using pyruvate as the nucleophilic component and accepts both stereochemical configurations at C2 of the electrophile. The sequence is that of 2-dehydro-3-deoxy-6-phosphogalactonate aldolase (dgoA) from Escherichia coli (strain K12).